The chain runs to 416 residues: MDKFQIQGNGPLKGEIRVSGAKNAALPILCAGLLTADTVTIDNVPNLQDTRTMLKLLRQMGMHAEMTGSTATLKGTDINSPEAPYELVKTMRASILVLGPLVARFGEARVSLPGGCGIGARPVDQHIKGLQAMGAEISIEHGFIHARASRLKGARVVTDMITVTGTENLLMAATLADGETVLENAAREPEVTDLANLLVKMGAKIDGIGTDRLIVQGVDKLHGATHSVVADRIEAGTFLCAAAASLGDLVLRDIPPLILDAVLIKLREAGANIETGDDWIRLSMSQRAQAVSFRTSEYPAFPTDMQAQFMALNAVAEGTARITETIFENRFMHVQELNRLGANITAEGNTAVVTGVPRLSGASVMATDLRASASLVIAGLVADGDTVIDRIYHLDRGYDRMEDKLSAVGAKIRRIA.

22-23 (KN) contacts phosphoenolpyruvate. R92 contributes to the UDP-N-acetyl-alpha-D-glucosamine binding site. C116 functions as the Proton donor in the catalytic mechanism. At C116 the chain carries 2-(S-cysteinyl)pyruvic acid O-phosphothioketal. Residues 121 to 125 (RPVDQ), D304, and I326 each bind UDP-N-acetyl-alpha-D-glucosamine.

The protein belongs to the EPSP synthase family. MurA subfamily.

The protein resides in the cytoplasm. It catalyses the reaction phosphoenolpyruvate + UDP-N-acetyl-alpha-D-glucosamine = UDP-N-acetyl-3-O-(1-carboxyvinyl)-alpha-D-glucosamine + phosphate. The protein operates within cell wall biogenesis; peptidoglycan biosynthesis. Its function is as follows. Cell wall formation. Adds enolpyruvyl to UDP-N-acetylglucosamine. This is UDP-N-acetylglucosamine 1-carboxyvinyltransferase from Cupriavidus pinatubonensis (strain JMP 134 / LMG 1197) (Cupriavidus necator (strain JMP 134)).